The primary structure comprises 254 residues: MTLLEVNNLGKHYNGDTKVLKNVNFEIGSGEFVSIIGPSGAGKSTLLRCINRMVEISEGSVFVDGQSVGDMKKKSLRTLRTNIGMIFQHYNLVPRLTVIENVLHGRFGYKTNLQGIFGRFTEKEKEKAFELLDRLGIADHAYKRCDQLSGGQQQRVGICRALIQDPKIILCDEPIASLDPNSSKIIMDYLKRITNELGITCLVNLHQVEVAKEYADRIIGLKSGEIVFDGPSNMLYQDKIESIYGFQQRELITV.

Residues 4 to 248 enclose the ABC transporter domain; the sequence is LEVNNLGKHY…KIESIYGFQQ (245 aa). ATP is bound at residue 37–44; it reads GPSGAGKS.

Belongs to the ABC transporter superfamily. Phosphonates importer (TC 3.A.1.9.1) family. In terms of assembly, the complex is composed of two ATP-binding proteins (PhnC), two transmembrane proteins (PhnE) and a solute-binding protein (PhnD).

It localises to the cell membrane. It carries out the reaction phosphonate(out) + ATP + H2O = phosphonate(in) + ADP + phosphate + H(+). Its function is as follows. Part of the ABC transporter complex PhnCDE involved in phosphonates import. Responsible for energy coupling to the transport system. The sequence is that of Phosphonates import ATP-binding protein PhnC 2 from Oceanobacillus iheyensis (strain DSM 14371 / CIP 107618 / JCM 11309 / KCTC 3954 / HTE831).